The sequence spans 327 residues: Zinc transport protein ZntB (327 aa).

The Cytoplasmic segment spans residues 1-271; it reads MDVVAGKALQ…AMNRRTYTMS (271 aa). A helical transmembrane segment spans residues 272–292; the sequence is LLAMVFLPTTFLTGLFGVNLG. The Periplasmic segment spans residues 293–300; sequence GIPGNTDS. A helical membrane pass occupies residues 301–321; it reads FGFATFCMMLVVLVLGVAWWL. The Cytoplasmic segment spans residues 322–327; that stretch reads KHSKWL.

It belongs to the CorA metal ion transporter (MIT) (TC 1.A.35) family.

It localises to the cell inner membrane. The enzyme catalyses Zn(2+)(out) + H(+)(out) = Zn(2+)(in) + H(+)(in). Functionally, zinc transporter. Acts as a Zn(2+):proton symporter, which likely mediates zinc ion uptake. The protein is Zinc transport protein ZntB of Yersinia enterocolitica serotype O:8 / biotype 1B (strain NCTC 13174 / 8081).